Here is an 804-residue protein sequence, read N- to C-terminus: Exocyst complex component 6 (804 aa).

It belongs to the SEC15 family. As to quaternary structure, the exocyst complex is composed of EXOC1, EXOC2, EXOC3, EXOC4, EXOC5, EXOC6, EXOC7 and EXOC8. Interacts with CNTRL. Interacts with RAB11A in a GTP-dependent manner.

It is found in the cytoplasm. Its subcellular location is the perinuclear region. It localises to the cell projection. The protein localises to the growth cone. The protein resides in the midbody. It is found in the midbody ring. Its function is as follows. Component of the exocyst complex involved in the docking of exocytic vesicles with fusion sites on the plasma membrane. Together with RAB11A, RAB3IP, RAB8A, PARD3, PRKCI, ANXA2, CDC42 and DNMBP promotes transcytosis of PODXL to the apical membrane initiation sites (AMIS), apical surface formation and lumenogenesis. The sequence is that of Exocyst complex component 6 (Exoc6) from Rattus norvegicus (Rat).